The following is a 571-amino-acid chain: MQTNLSQLIKVARGETEADLVLLNARVINVFNAEIEQANVAVFDGKIAGVGDYRHGKEVIDLKGAYLLPGLINGHTHVESSMLDIAQYARAVVSHGTLALITDLHEISNVCGKEGIDYVLDASADLPLSIFLQVPSCVPATHLETAGAEINSQDVADLLRLPNVTGLGEMMNFPGVLFGVPSVLDKIIAAAGKVLDGHAPGLSGKDLNAYISAGIHSDHECIHLAEAKEKLARGMYIMIREGSSEKNLAELLPLVTDQTYKRCLFVVDDRSCADLKSDGDIDAVVRKAIRLGLDPVRAIQLASINTAEYFHLQGHGAIAPGYLANMIVCQNLEQLDIDMVFHKGKLVAEKGQALFKPQSRIPKSLLNSIHIRPFDTKDLILKTIQPQIPVIEVIPGQIVTRRLDLKIPAENGVIKANTELDLLKIVVMERHHQSGNMGHGLIRGFGLKKGAIASSVAHDSHNVVAVGTNDADLYTAIKELERINGGIALAVDGQVTASVSLPVAGLLSTKPLEEVVTELEEINNQVAKLGCKLSAPFATLSFMALPVIPELRLTDLGLVDVKTFKLIPQET.

The protein belongs to the metallo-dependent hydrolases superfamily. Adenine deaminase family. Mn(2+) serves as cofactor.

The catalysed reaction is adenine + H2O + H(+) = hypoxanthine + NH4(+). The sequence is that of Adenine deaminase from Dehalococcoides mccartyi (strain CBDB1).